The primary structure comprises 386 residues: CRISPR system endoribonuclease Csm6' (386 aa).

Residues 1–146 (MRVLISAVGD…ASNENIGHDN (146 aa)) are CARF domain. An HEPN domain region spans residues 147 to 386 (DENIDELIEV…LNKILLTKLN (240 aa)).

Belongs to the CRISPR-associated Csm6 family. As to quaternary structure, homodimer. The composite ssRNase active site is formed at the dimer interface.

Its activity is regulated as follows. Non-specific ssRNase activity is stimulated about 1000-fold by cyclic oligoadenylate (cOA), a second messenger produced by Cas10 of the ternary Csm effector complex in the presence of a cognate target RNA. Its function is as follows. CRISPR (clustered regularly interspaced short palindromic repeat) is an adaptive immune system that provides protection against mobile genetic elements (viruses, transposable elements and conjugative plasmids). CRISPR clusters contain spacers, sequences complementary to antecedent mobile elements, and target invading nucleic acids. CRISPR clusters are transcribed and processed into CRISPR RNA (crRNA). The type III-A Csm complex binds crRNA and acts as a crRNA-guided RNase, DNase and cyclic oligoadenylate synthase; binding of target RNA cognate to the crRNA is required for all activities. In a heterologous host this Csm effector complex restricts ssRNA phage MS2, suggesting it may target RNA viruses in vivo. This protein is not part of the Csm complex. Functionally, csm functions as a non-specific ssDNase. Base-pairing between crRNA and target RNA to form a ternary Csm complex activates a ssDNase activity; target RNA cleavage suppresses the ssDNase, a temporal control that prevents uncontrolled DNA degradation. Viral RNA transcripts probably tether the Csm complex to the viral genome, recruiting Cas10 ssDNA activity which is able to degrade DNA in the transcription bubble, spatially controlling the DNase activity. A single-strand-specific endoribonuclease (ssRNase) that is approximately 1000-fold stimulated by cyclic oligoadenylate (cOA); although several species of cOA are synthesized by this organism only cyclic hexaadenylate (cA6) stimulates the ssRNase activity. Cleaves preferentially within GA or AA dinucleotides, although the presence of cA6 broadens the preference. In Streptococcus thermophilus, this protein is CRISPR system endoribonuclease Csm6'.